Here is a 195-residue protein sequence, read N- to C-terminus: Archaetidylinositol phosphate synthase (195 aa).

2 helical membrane passes run 27–47 (IALP…AASA) and 54–74 (LITG…DGAV). Positions 68, 71, 89, and 93 each coordinate Mg(2+). The active-site Proton acceptor is Asp-93. 2 consecutive transmembrane segments (helical) span residues 99–119 (IIII…LLAL) and 158–178 (LAGY…LAAL).

Belongs to the CDP-alcohol phosphatidyltransferase class-I family. The cofactor is Mn(2+). Mg(2+) serves as cofactor.

It is found in the cell membrane. The enzyme catalyses CDP-2,3-bis-O-(phytanyl)-sn-glycerol + 1D-myo-inositol 3-phosphate = saturated 1-archaetidyl-1D-myo-inositol 3-phosphate + CMP + H(+). It participates in lipid metabolism; phospholipid metabolism. Functionally, catalyzes the formation of archaetidylinositol phosphate (AIP) from CDP-archaeol (CDP-ArOH or CDP-2,3-bis-(O-phytanyl)-sn-glycerol) and 1L-myo-inositol 1-phosphate (IP or 1D-myo-inositol 3-phosphate). AIP is a precursor of archaetidyl-myo-inositol (AI), an ether-type inositol phospholipid ubiquitously distributed in archaea membranes and essential for glycolipid biosynthesis in archaea. The protein is Archaetidylinositol phosphate synthase of Methanothermobacter thermautotrophicus (strain ATCC 29096 / DSM 1053 / JCM 10044 / NBRC 100330 / Delta H) (Methanobacterium thermoautotrophicum).